Reading from the N-terminus, the 472-residue chain is Squamosa promoter-binding-like protein 18 (472 aa).

Positions 89–110 (AKVPPSTSTLKRPRGGGGGGGG) are disordered. The SBP-type zinc-finger motif lies at 112–189 (CPSCAVDGCK…DGHNRRRRKP (78 aa)). Cysteine 115, cysteine 120, cysteine 137, histidine 140, cysteine 156, cysteine 159, histidine 163, and cysteine 175 together coordinate Zn(2+). Positions 172–188 (KRSCRKRLDGHNRRRRK) match the Bipartite nuclear localization signal motif. Disordered regions lie at residues 179-218 (LDGH…RPEP), 233-261 (SHHH…TAAF), and 358-381 (SVDV…HHHH). Residues 192–209 (DSMSSGSFMTSQQGTRFA) are compositionally biased toward polar residues. The span at 252–261 (SPSSATTAAF) shows a compositional bias: low complexity.

As to expression, expressed in young panicles.

It is found in the nucleus. Functionally, trans-acting factor that binds specifically to the consensus nucleotide sequence 5'-TNCGTACAA-3'. May be involved in panicle development. This chain is Squamosa promoter-binding-like protein 18 (SPL18), found in Oryza sativa subsp. japonica (Rice).